Reading from the N-terminus, the 82-residue chain is Large ribosomal subunit protein bL31B (82 aa).

It belongs to the bacterial ribosomal protein bL31 family. Type B subfamily. As to quaternary structure, part of the 50S ribosomal subunit.

This Pectobacterium carotovorum subsp. carotovorum (strain PC1) protein is Large ribosomal subunit protein bL31B.